A 438-amino-acid polypeptide reads, in one-letter code: MVKNVTVIGGGLAGSEAAWQLAKRGIEVDLYEMRPKKNTPAHETANFAELVCTNSMRSNQLSNAVGLLKEEMRQLDSLIMKAADETAVPAGGALAVDRDKFSAVVTKTLKDLPNVHVHEEEITEIPKDGITIIATGPLTSDTLAEQIKEFCGTDSLHFFDAAAPIVAASSINRDIVYKKSRYDKGEAAYLNCPMTKEEFYNFYKNLVGAETATLHGFEDKNVFEGCMPIEVMAKRGEKTMLFGPLKPVGLEDPKTGKTPYAVVQLRQDNAASTMYNIVGFQTHLKYGEQKRVFSMIPGLENAKFVRYGKMHRNTYIASPEVLNANYEARKQTGLFFAGQMTGVEGYVESAGSGLVAGINAAREALGEETLFFPKSTALGSMANYITTTSAKHFQPMNASYALLPKLDYKVRNKQERHLEISKRALKDLEAFKEEKKLD.

9–14 (GGGLAG) contributes to the FAD binding site.

The protein belongs to the MnmG family. TrmFO subfamily. FAD is required as a cofactor.

It is found in the cytoplasm. It catalyses the reaction uridine(54) in tRNA + (6R)-5,10-methylene-5,6,7,8-tetrahydrofolate + NADH + H(+) = 5-methyluridine(54) in tRNA + (6S)-5,6,7,8-tetrahydrofolate + NAD(+). It carries out the reaction uridine(54) in tRNA + (6R)-5,10-methylene-5,6,7,8-tetrahydrofolate + NADPH + H(+) = 5-methyluridine(54) in tRNA + (6S)-5,6,7,8-tetrahydrofolate + NADP(+). Its function is as follows. Catalyzes the folate-dependent formation of 5-methyl-uridine at position 54 (M-5-U54) in all tRNAs. This Lactobacillus johnsonii (strain CNCM I-12250 / La1 / NCC 533) protein is Methylenetetrahydrofolate--tRNA-(uracil-5-)-methyltransferase TrmFO.